Here is a 420-residue protein sequence, read N- to C-terminus: Glucose-1-phosphate adenylyltransferase (420 aa).

Residues Tyr107, Gly173, 188 to 189 (EK), and Ser206 contribute to the alpha-D-glucose 1-phosphate site.

This sequence belongs to the bacterial/plant glucose-1-phosphate adenylyltransferase family. In terms of assembly, homotetramer.

It carries out the reaction alpha-D-glucose 1-phosphate + ATP + H(+) = ADP-alpha-D-glucose + diphosphate. The protein operates within glycan biosynthesis; glycogen biosynthesis. Involved in the biosynthesis of ADP-glucose, a building block required for the elongation reactions to produce glycogen. Catalyzes the reaction between ATP and alpha-D-glucose 1-phosphate (G1P) to produce pyrophosphate and ADP-Glc. This chain is Glucose-1-phosphate adenylyltransferase, found in Shewanella baltica (strain OS155 / ATCC BAA-1091).